Reading from the N-terminus, the 241-residue chain is Folate receptor alpha (241 aa).

Residues 1–19 (MAWQMTQLLLLALVAAAWG) form the signal peptide. Disulfide bonds link Cys36–Cys64, Cys56–Cys104, Cys65–Cys108, Cys88–Cys174, Cys95–Cys145, Cys134–Cys208, Cys138–Cys188, and Cys151–Cys168. An N-linked (GlcNAc...) asparagine glycan is attached at Asn68. Folate is bound by residues Asp102, Tyr106, 123-127 (WRKER), 156-161 (HKGWNW), and Ser195. N-linked (GlcNAc...) asparagine glycosylation occurs at Asn160. A lipid anchor (GPI-anchor amidated serine) is attached at Ser234. Residues 235-241 (GSTPQGI) constitute a propeptide, removed in mature form.

The protein belongs to the folate receptor family. In terms of processing, the secreted form is derived from the membrane-bound form either by cleavage of the GPI anchor, or/and by proteolysis catalyzed by a metalloprotease. Detected in milk (at protein level).

The protein localises to the cell membrane. Its subcellular location is the apical cell membrane. The protein resides in the basolateral cell membrane. It is found in the secreted. It localises to the cytoplasmic vesicle. The protein localises to the clathrin-coated vesicle. Its subcellular location is the endosome. Functionally, binds to folate and reduced folic acid derivatives and mediates delivery of 5-methyltetrahydrofolate and folate analogs into the interior of cells. Has high affinity for folate and folic acid analogs at neutral pH. Exposure to slightly acidic pH after receptor endocytosis triggers a conformation change that strongly reduces its affinity for folates and mediates their release. Required for normal embryonic development and normal cell proliferation. This Bos taurus (Bovine) protein is Folate receptor alpha (FOLR1).